The chain runs to 513 residues: ATP synthase subunit alpha (513 aa).

169-176 (GDRQTGKT) is a binding site for ATP.

The protein belongs to the ATPase alpha/beta chains family. F-type ATPases have 2 components, CF(1) - the catalytic core - and CF(0) - the membrane proton channel. CF(1) has five subunits: alpha(3), beta(3), gamma(1), delta(1), epsilon(1). CF(0) has three main subunits: a(1), b(2) and c(9-12). The alpha and beta chains form an alternating ring which encloses part of the gamma chain. CF(1) is attached to CF(0) by a central stalk formed by the gamma and epsilon chains, while a peripheral stalk is formed by the delta and b chains.

The protein resides in the cell inner membrane. It catalyses the reaction ATP + H2O + 4 H(+)(in) = ADP + phosphate + 5 H(+)(out). Functionally, produces ATP from ADP in the presence of a proton gradient across the membrane. The alpha chain is a regulatory subunit. The polypeptide is ATP synthase subunit alpha (Citrobacter koseri (strain ATCC BAA-895 / CDC 4225-83 / SGSC4696)).